The primary structure comprises 258 residues: Acyl-[acyl-carrier-protein]--UDP-N-acetylglucosamine O-acyltransferase (258 aa).

Belongs to the transferase hexapeptide repeat family. LpxA subfamily. As to quaternary structure, homotrimer.

The protein resides in the cytoplasm. The enzyme catalyses a (3R)-hydroxyacyl-[ACP] + UDP-N-acetyl-alpha-D-glucosamine = a UDP-3-O-[(3R)-3-hydroxyacyl]-N-acetyl-alpha-D-glucosamine + holo-[ACP]. It participates in glycolipid biosynthesis; lipid IV(A) biosynthesis; lipid IV(A) from (3R)-3-hydroxytetradecanoyl-[acyl-carrier-protein] and UDP-N-acetyl-alpha-D-glucosamine: step 1/6. Involved in the biosynthesis of lipid A, a phosphorylated glycolipid that anchors the lipopolysaccharide to the outer membrane of the cell. This is Acyl-[acyl-carrier-protein]--UDP-N-acetylglucosamine O-acyltransferase from Syntrophobacter fumaroxidans (strain DSM 10017 / MPOB).